Reading from the N-terminus, the 336-residue chain is Ferrochelatase (336 aa).

Residues H206 and E287 each coordinate Fe cation.

The protein belongs to the ferrochelatase family.

It localises to the cytoplasm. It catalyses the reaction heme b + 2 H(+) = protoporphyrin IX + Fe(2+). The protein operates within porphyrin-containing compound metabolism; protoheme biosynthesis; protoheme from protoporphyrin-IX: step 1/1. In terms of biological role, catalyzes the ferrous insertion into protoporphyrin IX. The protein is Ferrochelatase of Neisseria meningitidis serogroup A / serotype 4A (strain DSM 15465 / Z2491).